We begin with the raw amino-acid sequence, 629 residues long: tRNA uridine 5-carboxymethylaminomethyl modification enzyme MnmG (629 aa).

Residues 13 to 18 (GGGHAG), valine 125, and serine 180 each bind FAD. Residue 273-287 (GPRYCPSIEDKVMRF) coordinates NAD(+). Glutamine 370 is an FAD binding site.

This sequence belongs to the MnmG family. Homodimer. Heterotetramer of two MnmE and two MnmG subunits. FAD serves as cofactor.

It is found in the cytoplasm. Functionally, NAD-binding protein involved in the addition of a carboxymethylaminomethyl (cmnm) group at the wobble position (U34) of certain tRNAs, forming tRNA-cmnm(5)s(2)U34. The polypeptide is tRNA uridine 5-carboxymethylaminomethyl modification enzyme MnmG (Salmonella paratyphi A (strain ATCC 9150 / SARB42)).